A 488-amino-acid polypeptide reads, in one-letter code: Multidrug resistance outer membrane protein MdtP (488 aa).

An N-terminal signal peptide occupies residues Met-1 to Gly-23. A lipid anchor (N-palmitoyl cysteine) is attached at Cys-24. Residue Cys-24 is the site of S-diacylglycerol cysteine attachment.

Belongs to the outer membrane factor (OMF) (TC 1.B.17) family. In terms of assembly, could be part of a tripartite efflux system composed of MdtN, MdtO and MdtP.

The protein resides in the cell outer membrane. In terms of biological role, could be involved in resistance to puromycin, acriflavine and tetraphenylarsonium chloride. The sequence is that of Multidrug resistance outer membrane protein MdtP (mdtP) from Escherichia coli O6:H1 (strain CFT073 / ATCC 700928 / UPEC).